We begin with the raw amino-acid sequence, 320 residues long: uncharacterized protein (320 aa).

46–53 (DVPGVGKT) contacts ATP.

It belongs to the MoxR family.

This is an uncharacterized protein from Bacillus subtilis (strain 168).